The sequence spans 338 residues: Lipoate-protein ligase A (338 aa).

The BPL/LPL catalytic domain occupies 29-216 (PATQRVLFLW…AFFVHYGERV (188 aa)). Residues Arg71, 76 to 79 (GAVF), and Lys134 each bind ATP. Lys134 lines the (R)-lipoate pocket.

It belongs to the LplA family. As to quaternary structure, monomer.

The protein localises to the cytoplasm. The enzyme catalyses L-lysyl-[lipoyl-carrier protein] + (R)-lipoate + ATP = N(6)-[(R)-lipoyl]-L-lysyl-[lipoyl-carrier protein] + AMP + diphosphate + H(+). Its pathway is protein modification; protein lipoylation via exogenous pathway; protein N(6)-(lipoyl)lysine from lipoate: step 1/2. It participates in protein modification; protein lipoylation via exogenous pathway; protein N(6)-(lipoyl)lysine from lipoate: step 2/2. Its function is as follows. Catalyzes both the ATP-dependent activation of exogenously supplied lipoate to lipoyl-AMP and the transfer of the activated lipoyl onto the lipoyl domains of lipoate-dependent enzymes. The protein is Lipoate-protein ligase A of Salmonella newport (strain SL254).